A 200-amino-acid polypeptide reads, in one-letter code: Inner membrane protein E199L (200 aa).

An N-linked (GlcNAc...) asparagine; by host glycan is attached at asparagine 131. Residues 150–170 (INVMNHPFLTLILIILILIII) traverse the membrane as a helical segment.

This sequence belongs to the asfivirus E199L family. In terms of assembly, interacts with host PYCR2; this interaction results in autophagy activation. Contains intramolecular disulfide bonds.

It is found in the virion membrane. The protein resides in the host membrane. In terms of biological role, essential for viral fusion with host endosomal membrane and core release. Not required for virus morphogenesis and egress. Induces complete autophagy through the interaction with and down-regulation of host PYCR2. This is Inner membrane protein E199L from Ornithodoros (relapsing fever ticks).